We begin with the raw amino-acid sequence, 122 residues long: Large ribosomal subunit protein uL14 (122 aa).

It belongs to the universal ribosomal protein uL14 family. As to quaternary structure, part of the 50S ribosomal subunit. Forms a cluster with proteins L3 and L19. In the 70S ribosome, L14 and L19 interact and together make contacts with the 16S rRNA in bridges B5 and B8.

In terms of biological role, binds to 23S rRNA. Forms part of two intersubunit bridges in the 70S ribosome. The protein is Large ribosomal subunit protein uL14 of Verminephrobacter eiseniae (strain EF01-2).